Consider the following 688-residue polypeptide: MDFITINSSNKTEEFALKQVVKQATSSLLYRLGKTIILASVCVEREPVSEDFLPLVVQFLEKSYAAGKIPGGFVKREGRAQDFEILTSRLIDRTLRPLFPKDYRYPTQITLMVLSHDIENDLQVSALNAASAALFLAHIAPIKSVSACRIARIGNEFIINPNTSLLNQSSLDLFVSGTKESLNMIEMRSLGQQLNALEEPLMLKALELAQKSLKETCTLYEEVFTPHQNELLFKESQGIIFNERLLDLLKNQYFDEIIKGIESSALSERENVFNEIAKKISEAHSEFSLEEIEWSLEKVKKTEIRRMIIQDKIRPDKRALEEVRPILIESDLLPMAHSSILFTRGQTQSLVVGVLGTDNDAQTHESLEHKAPIKERFMFHYNFPPFCVGEASSIGAASRRELGHGNLAKRALETSIKNKEQVIRLVSEILESNGSSSMASVCAGSLALYASGVEIHDLVAGVAMGMVSEGQDHAILSDISGLEDAEGDMDFKIAGNLEGITAMQMDTKMSGIQLEILYQALLQAKEARKHILKIMHEAKEKIVINFSHLPTTEIFNVAPDKIVEIIGQGGRVIKEIVEKFEVKIDLNKPSGEVKIMGNKERVLKTKEFILNYLHSLDQELEQYAIDEVLEAQVKRIVDFGAFLSLPKGGEGLLRKQNMDRCQVVLKEGDSIRCRVISFNKGKIALDLA.

Mg(2+) is bound by residues Asp484 and Asp490. Residues Pro550–Ile609 enclose the KH domain. The region spanning Asp626–Ala688 is the S1 motif domain.

It belongs to the polyribonucleotide nucleotidyltransferase family. Mg(2+) serves as cofactor.

It localises to the cytoplasm. The enzyme catalyses RNA(n+1) + phosphate = RNA(n) + a ribonucleoside 5'-diphosphate. Its function is as follows. Involved in mRNA degradation. Catalyzes the phosphorolysis of single-stranded polyribonucleotides processively in the 3'- to 5'-direction. In Helicobacter pylori (strain HPAG1), this protein is Polyribonucleotide nucleotidyltransferase.